A 447-amino-acid chain; its full sequence is Probable ethanolamine kinase B (447 aa).

Positions 178 to 208 (STTISTSTSTSTSTSSTSPSTSPSLENSTLS) are enriched in low complexity. The disordered stretch occupies residues 178-217 (STTISTSTSTSTSTSSTSPSTSPSLENSTLSPRNMNTQTS).

This sequence belongs to the choline/ethanolamine kinase family.

The protein localises to the cytoplasm. It carries out the reaction ethanolamine + ATP = phosphoethanolamine + ADP + H(+). It functions in the pathway phospholipid metabolism; phosphatidylethanolamine biosynthesis; phosphatidylethanolamine from ethanolamine: step 1/3. Its function is as follows. Highly specific for ethanolamine phosphorylation. May be a rate-controlling step in phosphatidylethanolamine biosynthesis. The chain is Probable ethanolamine kinase B (etnkB) from Dictyostelium discoideum (Social amoeba).